The primary structure comprises 321 residues: Probable arabinan endo-1,5-alpha-L-arabinosidase C (321 aa).

Residues 1–18 (MYLYTLILLFLASANVNA) form the signal peptide. The Proton acceptor role is filled by aspartate 33. Asparagine 192 carries an N-linked (GlcNAc...) asparagine glycan. The active-site Proton donor is glutamate 200. Asparagine 224 is a glycosylation site (N-linked (GlcNAc...) asparagine).

Belongs to the glycosyl hydrolase 43 family.

It is found in the secreted. The catalysed reaction is Endohydrolysis of (1-&gt;5)-alpha-arabinofuranosidic linkages in (1-&gt;5)-arabinans.. Its pathway is glycan metabolism; L-arabinan degradation. In terms of biological role, endo-1,5-alpha-L-arabinanase involved in degradation of pectin. Its preferred substrate is linear 1,5-alpha-L-arabinan. The protein is Probable arabinan endo-1,5-alpha-L-arabinosidase C (abnC) of Aspergillus fumigatus (strain ATCC MYA-4609 / CBS 101355 / FGSC A1100 / Af293) (Neosartorya fumigata).